The sequence spans 333 residues: MVSSTPEMLQGGVTREQIVPSRKRIKLPAWLEIAKPRLIPLLLATTLGGMALSEGWPLPSLRLACTLGGGALAAAAAGVLNCIWEQDLDGRMQRTSGRALPSGRLSPTAAFIGAISCTLAAAALLVSGVNCLAAGLSLLGLCSYVLLYTAILKPRTPQNIVIGGVAGAIPPLVGAAAASGHVGLSGWWLFSLVMLWTPAHFWALALLLRDDYRAVGIPMLPVIQGPVVTVRAISRYGWATVLLSGFGVWALPEGGLLYGLLLIPFNARLLQMVHQLGAAPENVDRAKGLFRWSIFYMFGICLLLVVSRLPMAANFDLQAWSLLQQMASSGQFI.

Helical transmembrane passes span 63–83 (LACTLGGGALAAAAAGVLNCI), 109–129 (AAFIGAISCTLAAAALLVSGV), 132–152 (LAAGLSLLGLCSYVLLYTAIL), 160–180 (IVIGGVAGAIPPLVGAAAASG), 188–208 (WLFSLVMLWTPAHFWALALLL), 214–234 (AVGIPMLPVIQGPVVTVRAIS), 245–265 (GFGVWALPEGGLLYGLLLIPF), and 292–312 (WSIFYMFGICLLLVVSRLPMA).

It belongs to the UbiA prenyltransferase family. Protoheme IX farnesyltransferase subfamily.

It localises to the cell inner membrane. It carries out the reaction heme b + (2E,6E)-farnesyl diphosphate + H2O = Fe(II)-heme o + diphosphate. The protein operates within porphyrin-containing compound metabolism; heme O biosynthesis; heme O from protoheme: step 1/1. Functionally, converts heme B (protoheme IX) to heme O by substitution of the vinyl group on carbon 2 of heme B porphyrin ring with a hydroxyethyl farnesyl side group. This Prochlorococcus marinus (strain MIT 9313) protein is Protoheme IX farnesyltransferase.